A 520-amino-acid polypeptide reads, in one-letter code: MAAMWRRRPLSSALLSFGLLLGGLPLAAPPLAGATEEPGAGQTPGAPVVAPQQSWNSCREFIADTSEIRTARCATVSVPVDYDQPGGTQAKLAVIRVPATGQRFGALLVNPGGPGASAVDMVAAMAPAIADTDILRHFDLVGFDPRGVGHSTPALRCRTDAEFDAYRRDPMADYSPAGVTHVEQVYRQLAQDCVDRMGFSFLANIGTASVARDMDMVRQALGDDQINYLGYSYGTELGTAYLERFGTHVRAMVLDGAIDPAVSPIEESISQMAGFQTAFNDYAADCARSPACPLGTDSAQWVNRYHALVDPLVQKPGKTSDPRGLSYADATTGTINALYSPQRWKYLTSGLLGLQRGSDAGDLLVLADDYDGRDADGHYSNDQDAFNAVRCVDAPTPADPAAWVAADQRIRQVAPFLSYGQFTGSAPRDLCALWPVPATSTPHPAAPAGAGKVVVVSTTHDPATPYQSGVDLARQLGAPLITFDGTQHTAVFDGNQCVDSAVMHYFLDGTLPPTSLRCAP.

An N-terminal signal peptide occupies residues 1-34 (MAAMWRRRPLSSALLSFGLLLGGLPLAAPPLAGA). The helical transmembrane segment at 104 to 124 (FGALLVNPGGPGASAVDMVAA) threads the bilayer. The 299-residue stretch at 105 to 403 (GALLVNPGGP…APTPADPAAW (299 aa)) folds into the AB hydrolase-1 domain. The active-site Nucleophile is the serine 232. The active site involves aspartate 461. Histidine 488 acts as the Proton donor in catalysis.

The protein belongs to the peptidase S33 family.

Its subcellular location is the cell membrane. The polypeptide is Putative hydrolase Mb2247c (Mycobacterium bovis (strain ATCC BAA-935 / AF2122/97)).